Reading from the N-terminus, the 411-residue chain is Prophage integrase IntR (411 aa).

Residues 81–176 (KTFGELCDIW…LLCSLLRFAY (96 aa)) form the Core-binding (CB) domain. Positions 197 to 404 (IKPDPLSKTE…IDDMNDEQIA (208 aa)) constitute a Tyr recombinase domain. Catalysis depends on residues R231, K266, R358, and H381. The O-(3'-phospho-DNA)-tyrosine intermediate role is filled by Y391.

It belongs to the 'phage' integrase family.

Its function is as follows. Integrase is necessary for integration of the phage into the host genome by site-specific recombination. In conjunction with excisionase, integrase is also necessary for excision of the prophage from the host genome. The polypeptide is Prophage integrase IntR (intR) (Escherichia coli (strain K12)).